Reading from the N-terminus, the 162-residue chain is UPF0303 protein Arad_3071 (162 aa).

Belongs to the UPF0303 family.

The polypeptide is UPF0303 protein Arad_3071 (Rhizobium rhizogenes (strain K84 / ATCC BAA-868) (Agrobacterium radiobacter)).